The chain runs to 192 residues: Ion-translocating oxidoreductase complex subunit B (192 aa).

The tract at residues 1–26 (MNTIWIAVAAISLLGLAFGAILGYAS) is hydrophobic. A 4Fe-4S domain is found at 32–91 (EDDPVVEKIDEILPQSQCGQCGYPGCRPYAEAISCNGEKINRCAPGGEAVMLKISELLNV). Residues C49, C52, C57, C74, C117, C120, C123, C127, C147, C150, C153, and C157 each coordinate [4Fe-4S] cluster. 4Fe-4S ferredoxin-type domains lie at 108-137 (VVAV…GATR) and 138-167 (AMHT…LQPV).

It belongs to the 4Fe4S bacterial-type ferredoxin family. RnfB subfamily. The complex is composed of six subunits: RsxA, RsxB, RsxC, RsxD, RsxE and RsxG. The cofactor is [4Fe-4S] cluster.

It localises to the cell inner membrane. Part of a membrane-bound complex that couples electron transfer with translocation of ions across the membrane. Required to maintain the reduced state of SoxR. The chain is Ion-translocating oxidoreductase complex subunit B from Escherichia fergusonii (strain ATCC 35469 / DSM 13698 / CCUG 18766 / IAM 14443 / JCM 21226 / LMG 7866 / NBRC 102419 / NCTC 12128 / CDC 0568-73).